The sequence spans 428 residues: 3-phosphoshikimate 1-carboxyvinyltransferase (428 aa).

Lys21, Ser22, and Arg26 together coordinate 3-phosphoshikimate. Position 21 (Lys21) interacts with phosphoenolpyruvate. Residues Gly91 and Arg119 each coordinate phosphoenolpyruvate. 3-phosphoshikimate is bound by residues Ser164, Gln166, Asp313, and Lys340. Residue Gln166 participates in phosphoenolpyruvate binding. Residue Asp313 is the Proton acceptor of the active site. Phosphoenolpyruvate contacts are provided by Arg344 and Arg386.

This sequence belongs to the EPSP synthase family. In terms of assembly, monomer.

It is found in the cytoplasm. It catalyses the reaction 3-phosphoshikimate + phosphoenolpyruvate = 5-O-(1-carboxyvinyl)-3-phosphoshikimate + phosphate. It participates in metabolic intermediate biosynthesis; chorismate biosynthesis; chorismate from D-erythrose 4-phosphate and phosphoenolpyruvate: step 6/7. Functionally, catalyzes the transfer of the enolpyruvyl moiety of phosphoenolpyruvate (PEP) to the 5-hydroxyl of shikimate-3-phosphate (S3P) to produce enolpyruvyl shikimate-3-phosphate and inorganic phosphate. This is 3-phosphoshikimate 1-carboxyvinyltransferase from Campylobacter jejuni (strain RM1221).